The chain runs to 146 residues: Hut operon positive regulatory protein (146 aa).

It belongs to the HutP family. In terms of assembly, homohexamer.

Antiterminator that binds to cis-acting regulatory sequences on the mRNA in the presence of histidine, thereby suppressing transcription termination and activating the hut operon for histidine utilization. The polypeptide is Hut operon positive regulatory protein (Bacillus cereus (strain AH820)).